The sequence spans 143 residues: MSTSSPFRVASKIVTAGCLCLPLFQRVLSDLSCEENEMCVNYDERYPDGWYIWFFLLIFLVVLLCGVVLFCLQCWLKRCGINPPRRTMAVFAVGDLDPVYGAEMAGSPTSGICHPTQNTELCSAPCFGALGPPPPYEEILKAN.

The signal sequence occupies residues 1–29 (MSTSSPFRVASKIVTAGCLCLPLFQRVLS). Residues 52–72 (IWFFLLIFLVVLLCGVVLFCL) traverse the membrane as a helical segment.

In terms of assembly, interacts with WWOX.

Its subcellular location is the membrane. The sequence is that of Transmembrane protein 207 from Mus musculus (Mouse).